Here is a 590-residue protein sequence, read N- to C-terminus: Putative DEAD-box ATP-dependent RNA helicase 51 (590 aa).

The segment at 1-81 is disordered; it reads MHPIKLCARS…KQGEGKKGSG (81 aa). Polar residues predominate over residues 40–51; that stretch reads AACNSEGENNAT. Residues 59–78 show a composition bias toward basic and acidic residues; the sequence is NKKMKEEKSKRKKKQGEGKK. Residues 86–114 carry the Q motif motif; sequence KLFSDLPISDLTANAIRDMNYTHLTEIQA. The Helicase ATP-binding domain occupies 117 to 293; that stretch reads IPPLMLGSDV…KLTFGSKEER (177 aa). ATP is bound at residue 130–137; the sequence is AKTGSGKT. A DEAD box motif is present at residues 240–243; the sequence is DEAD. Residues 329–481 enclose the Helicase C-terminal domain; the sequence is VLYAFLKKAL…ELVPKLQPYL (153 aa). The interval 549-590 is disordered; the sequence is LESSASKHRKKRNVNTGRRHGIGPSNPYGRKGSDDRRQFARF. The segment covering 554 to 569 has biased composition (basic residues); that stretch reads SKHRKKRNVNTGRRHG. Residues 579–590 show a composition bias toward basic and acidic residues; that stretch reads KGSDDRRQFARF.

This sequence belongs to the DEAD box helicase family. DDX18/HAS1 subfamily.

The catalysed reaction is ATP + H2O = ADP + phosphate + H(+). The protein is Putative DEAD-box ATP-dependent RNA helicase 51 of Oryza sativa subsp. japonica (Rice).